The chain runs to 360 residues: GDSL esterase/lipase At1g06990 (360 aa).

Residues 1 to 22 (MLIHVIIFMIITTMQFSTTCHA) form the signal peptide. N-linked (GlcNAc...) asparagine glycosylation is found at Asn-26 and Asn-31. Ser-44 (nucleophile) is an active-site residue. N-linked (GlcNAc...) asparagine glycosylation is found at Asn-73, Asn-126, and Asn-272. Residues Asp-335 and His-338 contribute to the active site.

The protein belongs to the 'GDSL' lipolytic enzyme family.

The protein resides in the secreted. This chain is GDSL esterase/lipase At1g06990, found in Arabidopsis thaliana (Mouse-ear cress).